We begin with the raw amino-acid sequence, 876 residues long: DNA mismatch repair protein MutS (876 aa).

626–633 (GPNMAGKS) provides a ligand contact to ATP. The tract at residues 829 to 856 (FRAAPPPPAPAAPPKASQVEERLRAIQP) is disordered. Residues 832–841 (APPPPAPAAP) are compositionally biased toward pro residues.

The protein belongs to the DNA mismatch repair MutS family.

This protein is involved in the repair of mismatches in DNA. It is possible that it carries out the mismatch recognition step. This protein has a weak ATPase activity. The sequence is that of DNA mismatch repair protein MutS from Cereibacter sphaeroides (strain ATCC 17025 / ATH 2.4.3) (Rhodobacter sphaeroides).